The sequence spans 407 residues: M protein, serotype 2.1 (407 aa).

Residues 1–41 (MARKDTNKQYSLRKLKTGTASVAVAVAVLGAGFANQTTVKA) form the signal peptide. The 2 X 7 AA tandem repeats stretch occupies residues 81-94 (VEEEHKKVEEEHKK). Basic and acidic residues-rich tracts occupy residues 83-144 (EEHK…KRYQ), 152-229 (QLEK…EKQI), 237-264 (LSRD…EKQI), and 272-288 (LSRD…KVEA). The segment at 83 to 289 (EEHKKVEEEH…REAKKKVEAD (207 aa)) is disordered. C repeat units lie at residues 151–185 (QQLE…EAEH), 186–220 (QKLK…EAEH), 221–255 (QKLK…EAEH), and 256–290 (QKLK…EADL). D repeat units lie at residues 323-328 (AKLEAE), 329-334 (AKALKE), 337-342 (AKQAEE), and 344-349 (AKLKGN). The disordered stretch occupies residues 344–382 (AKLKGNQTPNAKVAPQANRSRSAMTQQKRTLPSTGETAN). A compositionally biased stretch (polar residues) spans 360-380 (ANRSRSAMTQQKRTLPSTGET). Residues 374 to 378 (LPSTG) carry the LPXTG sorting signal motif. Thr377 carries the post-translational modification Pentaglycyl murein peptidoglycan amidated threonine. Positions 378–407 (GETANPFFTAAAATVMVSAGMLALKRKEEN) are cleaved as a propeptide — removed by sortase.

It belongs to the M protein family.

Its subcellular location is the secreted. The protein localises to the cell wall. Functionally, this protein is one of the different antigenic serotypes of protein M. Protein M is closely associated with virulence of the bacterium and can render the organism resistant to phagocytosis. This chain is M protein, serotype 2.1 (emmL2.1), found in Streptococcus pyogenes.